The following is a 627-amino-acid chain: Zinc cluster transcription factor acuM (627 aa).

6 disordered regions span residues 1 to 40 (MGCR…PARP), 129 to 148 (NGTA…GTME), 155 to 193 (AEGD…RRKV), 225 to 258 (CHDE…FSNA), 277 to 305 (PDGT…QNSL), and 394 to 416 (AQPS…PSST). The span at 162–171 (MESGSKNTAS) shows a compositional bias: polar residues. The zn(2)-C6 fungal-type DNA-binding region spans 197-225 (CVYCRRSHMTCDSERPCTRCIKRNIGHLC). Residues 225-251 (CHDEPREPSKRARSEHEHSTAEEDGHS) are compositionally biased toward basic and acidic residues. A compositionally biased stretch (polar residues) spans 286–305 (SSVSAVQHNTIPSSSAQNSL). Residues 394-403 (AQPSQPTQSQ) are compositionally biased toward low complexity. Over residues 404–416 (PHQNDSVQGPSST) the composition is skewed to polar residues.

It is found in the nucleus. Functionally, transcription factor that governs genes involved in reductive and siderophore-mediated iron acquisition, and carbon metabolism. Suppresses the expression of sreA and induces hapX to stimulate expression of genes involved in both reductive iron assimilation and siderophore-mediated iron uptake which is essential for the maximal virulence. Also regulates genes involved in gluconeogenesis. In Aspergillus fumigatus (strain ATCC MYA-4609 / CBS 101355 / FGSC A1100 / Af293) (Neosartorya fumigata), this protein is Zinc cluster transcription factor acuM.